The primary structure comprises 496 residues: Ribose import ATP-binding protein RbsA (496 aa).

ABC transporter domains follow at residues 5-241 (LQMK…VGRE) and 252-496 (SPGE…VGGE). 37-44 (GENGAGKS) lines the ATP pocket.

It belongs to the ABC transporter superfamily. Ribose importer (TC 3.A.1.2.1) family. In terms of assembly, the complex is composed of an ATP-binding protein (RbsA), two transmembrane proteins (RbsC) and a solute-binding protein (RbsB).

The protein localises to the cell membrane. It carries out the reaction D-ribose(out) + ATP + H2O = D-ribose(in) + ADP + phosphate + H(+). In terms of biological role, part of the ABC transporter complex RbsABC involved in ribose import. Responsible for energy coupling to the transport system. In Caldanaerobacter subterraneus subsp. tengcongensis (strain DSM 15242 / JCM 11007 / NBRC 100824 / MB4) (Thermoanaerobacter tengcongensis), this protein is Ribose import ATP-binding protein RbsA.